We begin with the raw amino-acid sequence, 396 residues long: Elongation factor Tu (396 aa).

The 197-residue stretch at 10 to 206 (KPHVNIGTIG…AVDESVPEPV (197 aa)) folds into the tr-type G domain. A G1 region spans residues 19–26 (GHVDHGKT). 19-26 (GHVDHGKT) contacts GTP. Mg(2+) is bound at residue Thr26. Residues 62 to 66 (GITIN) are G2. Residues 83-86 (DAPG) form a G3 region. Residues 83–87 (DAPGH) and 138–141 (NKSD) each bind GTP. Residues 138–141 (NKSD) form a G4 region. Residues 176 to 178 (SGL) form a G5 region.

This sequence belongs to the TRAFAC class translation factor GTPase superfamily. Classic translation factor GTPase family. EF-Tu/EF-1A subfamily. In terms of assembly, monomer.

Its subcellular location is the cytoplasm. It carries out the reaction GTP + H2O = GDP + phosphate + H(+). GTP hydrolase that promotes the GTP-dependent binding of aminoacyl-tRNA to the A-site of ribosomes during protein biosynthesis. The sequence is that of Elongation factor Tu from Beutenbergia cavernae (strain ATCC BAA-8 / DSM 12333 / CCUG 43141 / JCM 11478 / NBRC 16432 / NCIMB 13614 / HKI 0122).